Here is a 176-residue protein sequence, read N- to C-terminus: Large ribosomal subunit protein uL30 (176 aa).

The protein belongs to the universal ribosomal protein uL30 family. In terms of assembly, part of the 50S ribosomal subunit.

This is Large ribosomal subunit protein uL30 from Pyrobaculum arsenaticum (strain DSM 13514 / JCM 11321 / PZ6).